A 466-amino-acid polypeptide reads, in one-letter code: 3-isopropylmalate dehydratase large subunit (466 aa).

Cys346, Cys406, and Cys409 together coordinate [4Fe-4S] cluster.

Belongs to the aconitase/IPM isomerase family. LeuC type 1 subfamily. In terms of assembly, heterodimer of LeuC and LeuD. Requires [4Fe-4S] cluster as cofactor.

It carries out the reaction (2R,3S)-3-isopropylmalate = (2S)-2-isopropylmalate. It participates in amino-acid biosynthesis; L-leucine biosynthesis; L-leucine from 3-methyl-2-oxobutanoate: step 2/4. Its function is as follows. Catalyzes the isomerization between 2-isopropylmalate and 3-isopropylmalate, via the formation of 2-isopropylmaleate. This is 3-isopropylmalate dehydratase large subunit from Cytophaga hutchinsonii (strain ATCC 33406 / DSM 1761 / CIP 103989 / NBRC 15051 / NCIMB 9469 / D465).